Consider the following 250-residue polypeptide: Ubiquinone/menaquinone biosynthesis C-methyltransferase UbiE (250 aa).

S-adenosyl-L-methionine contacts are provided by residues Thr-73, Asp-94, Asn-122–Ala-123, and Ser-139.

It belongs to the class I-like SAM-binding methyltransferase superfamily. MenG/UbiE family.

The enzyme catalyses a 2-demethylmenaquinol + S-adenosyl-L-methionine = a menaquinol + S-adenosyl-L-homocysteine + H(+). It carries out the reaction a 2-methoxy-6-(all-trans-polyprenyl)benzene-1,4-diol + S-adenosyl-L-methionine = a 5-methoxy-2-methyl-3-(all-trans-polyprenyl)benzene-1,4-diol + S-adenosyl-L-homocysteine + H(+). It functions in the pathway quinol/quinone metabolism; menaquinone biosynthesis; menaquinol from 1,4-dihydroxy-2-naphthoate: step 2/2. The protein operates within cofactor biosynthesis; ubiquinone biosynthesis. In terms of biological role, methyltransferase required for the conversion of demethylmenaquinol (DMKH2) to menaquinol (MKH2) and the conversion of 2-polyprenyl-6-methoxy-1,4-benzoquinol (DDMQH2) to 2-polyprenyl-3-methyl-6-methoxy-1,4-benzoquinol (DMQH2). This Francisella tularensis subsp. mediasiatica (strain FSC147) protein is Ubiquinone/menaquinone biosynthesis C-methyltransferase UbiE.